The primary structure comprises 141 residues: Small ribosomal subunit protein uS8c (141 aa).

This sequence belongs to the universal ribosomal protein uS8 family. As to quaternary structure, part of the 30S ribosomal subunit.

It is found in the plastid. Its subcellular location is the chloroplast. Functionally, one of the primary rRNA binding proteins, it binds directly to 16S rRNA central domain where it helps coordinate assembly of the platform of the 30S subunit. This chain is Small ribosomal subunit protein uS8c (rps8), found in Pleurastrum terricola (Filamentous green alga).